Consider the following 322-residue polypeptide: Ferredoxin--NADP reductase (322 aa).

FAD is bound by residues aspartate 34, glutamine 42, tyrosine 47, valine 87, phenylalanine 120, aspartate 279, and threonine 320.

The protein belongs to the ferredoxin--NADP reductase type 2 family. In terms of assembly, homodimer. The cofactor is FAD.

It catalyses the reaction 2 reduced [2Fe-2S]-[ferredoxin] + NADP(+) + H(+) = 2 oxidized [2Fe-2S]-[ferredoxin] + NADPH. This chain is Ferredoxin--NADP reductase, found in Streptococcus pneumoniae serotype 19F (strain G54).